The following is a 740-amino-acid chain: NAD(P)H-quinone oxidoreductase subunit 5, chloroplastic (740 aa).

Transmembrane regions (helical) follow at residues 9 to 29 (WIIP…LLLF), 40 to 60 (WSFL…YLSI), 89 to 109 (IDPL…LVLI), 125 to 145 (FAYM…SNLI), 147 to 167 (IYFF…FWFT), 185 to 205 (GDFG…SFEF), 221 to 241 (VNLL…IAKS), 258 to 278 (TPIS…FLVA), 283 to 303 (LFIV…ITIL), 327 to 347 (LGYM…FHLI), 354 to 374 (ALLF…VGYS), 396 to 416 (TAFL…CFWS), 425 to 445 (LLFS…TAFY), 547 to 567 (ILFP…IGIP), 606 to 626 (FSVS…KPFY), and 718 to 738 (ISSY…FLKI).

This sequence belongs to the complex I subunit 5 family. As to quaternary structure, NDH is composed of at least 16 different subunits, 5 of which are encoded in the nucleus.

The protein resides in the plastid. It localises to the chloroplast thylakoid membrane. It carries out the reaction a plastoquinone + NADH + (n+1) H(+)(in) = a plastoquinol + NAD(+) + n H(+)(out). The catalysed reaction is a plastoquinone + NADPH + (n+1) H(+)(in) = a plastoquinol + NADP(+) + n H(+)(out). Its function is as follows. NDH shuttles electrons from NAD(P)H:plastoquinone, via FMN and iron-sulfur (Fe-S) centers, to quinones in the photosynthetic chain and possibly in a chloroplast respiratory chain. The immediate electron acceptor for the enzyme in this species is believed to be plastoquinone. Couples the redox reaction to proton translocation, and thus conserves the redox energy in a proton gradient. In Aethionema cordifolium (Lebanon stonecress), this protein is NAD(P)H-quinone oxidoreductase subunit 5, chloroplastic (ndhF).